The following is a 252-amino-acid chain: 4-hydroxy-tetrahydrodipicolinate reductase (252 aa).

Residues 8 to 13 (GCCGKM), 84 to 86 (CST), and 108 to 111 (SANM) each bind NAD(+). Residue H141 is the Proton donor/acceptor of the active site. H142 lines the (S)-2,3,4,5-tetrahydrodipicolinate pocket. Catalysis depends on K145, which acts as the Proton donor. Residue 151-152 (GT) coordinates (S)-2,3,4,5-tetrahydrodipicolinate.

The protein belongs to the DapB family.

The protein localises to the cytoplasm. It carries out the reaction (S)-2,3,4,5-tetrahydrodipicolinate + NAD(+) + H2O = (2S,4S)-4-hydroxy-2,3,4,5-tetrahydrodipicolinate + NADH + H(+). It catalyses the reaction (S)-2,3,4,5-tetrahydrodipicolinate + NADP(+) + H2O = (2S,4S)-4-hydroxy-2,3,4,5-tetrahydrodipicolinate + NADPH + H(+). Its pathway is amino-acid biosynthesis; L-lysine biosynthesis via DAP pathway; (S)-tetrahydrodipicolinate from L-aspartate: step 4/4. Functionally, catalyzes the conversion of 4-hydroxy-tetrahydrodipicolinate (HTPA) to tetrahydrodipicolinate. This is 4-hydroxy-tetrahydrodipicolinate reductase from Clostridium botulinum (strain Eklund 17B / Type B).